We begin with the raw amino-acid sequence, 317 residues long: Acetyl-coenzyme A carboxylase carboxyl transferase subunit alpha (317 aa).

The CoA carboxyltransferase C-terminal domain occupies 40–294 (RLQHKSQELT…KQQILADLAE (255 aa)).

Belongs to the AccA family. In terms of assembly, acetyl-CoA carboxylase is a heterohexamer composed of biotin carboxyl carrier protein (AccB), biotin carboxylase (AccC) and two subunits each of ACCase subunit alpha (AccA) and ACCase subunit beta (AccD).

Its subcellular location is the cytoplasm. The catalysed reaction is N(6)-carboxybiotinyl-L-lysyl-[protein] + acetyl-CoA = N(6)-biotinyl-L-lysyl-[protein] + malonyl-CoA. Its pathway is lipid metabolism; malonyl-CoA biosynthesis; malonyl-CoA from acetyl-CoA: step 1/1. Functionally, component of the acetyl coenzyme A carboxylase (ACC) complex. First, biotin carboxylase catalyzes the carboxylation of biotin on its carrier protein (BCCP) and then the CO(2) group is transferred by the carboxyltransferase to acetyl-CoA to form malonyl-CoA. This chain is Acetyl-coenzyme A carboxylase carboxyl transferase subunit alpha, found in Haemophilus ducreyi (strain 35000HP / ATCC 700724).